A 1166-amino-acid chain; its full sequence is MSGRRCAGGGAACASAAAEAVEPAARELFEACRNGDVERVKRLVTPEKVNSRDTAGRKSTPLHFAAGFGRKDVVEYLLQNGANVQARDDGGLIPLHNACSFGHAEVVNLLLRHGADPNARDNWNYTPLHEAAIKGKIDVCIVLLQHGAEPTIRNTDGRTALDLADPSAKAVLTGEYKKDELLESARSGNEEKMMALLTPLNVNCHASDGRKSTPLHLAAGYNRVKIVQLLLQHGADVHAKDKGDLVPLHNACSYGHYEVTELLVKHGACVNAMDLWQFTPLHEAASKNRVEVCSLLLSYGADPTLLNCHNKSAIDLAPTPQLKERLAYEFKGHSLLQAAREADVTRIKKHLSLEMVNFKHPQTHETALHCAAASPYPKRKQICELLLRKGANINEKTKEFLTPLHVASEKAHNDVVEVVVKHEAKVNALDNLGQTSLHRAAYCGHLQTCRLLLSYGCDPNIISLQGFTALQMGNENVQQLLQEGISLGNSEADRQLLEAAKAGDVETVKKLCTVQSVNCRDIEGRQSTPLHFAAGYNRVSVVEYLLQHGADVHAKDKGGLVPLHNACSYGHYEVAELLVKHGAVVNVADLWKFTPLHEAAAKGKYEICKLLLQHGADPTKKNRDGNTPLDLVKDGDTDIQDLLRGDAALLDAAKKGCLARVKKLSSPDNVNCRDTQGRHSTPLHLAAGYNNLEVAEYLLQHGADVNAQDKGGLIPLHNAASYGHVDVAALLIKYNACVNATDKWAFTPLHEAAQKGRTQLCALLLAHGADPTLKNQEGQTPLDLVSADDVSALLTAAMPPSALPSCYKPQVLNGVRSPGATADALSSGPSSPSSLSAASSLDNLSGSFSELSSVVSSSGTEGASSLEKKEVPGVDFSITQFVRNLGLEHLMDIFEREQITLDVLVEMGHKELKEIGINAYGHRHKLIKGVERLISGQQGLNPYLTLNTSGSGTILIDLSPDDKEFQSVEEEMQSTVREHRDGGHAGGIFNRYNILKIQKVCNKKLWERYTHRRKEVSEENHNHANERMLFHGSPFVNAIIHKGFDERHAYIGGMFGAGIYFAENSSKSNQYVYGIGGGTGCPVHKDRSCYICHRQLLFCRVTLGKSFLQFSAMKMAHSPPGHHSVTGRPSVNGLALAEYVIYRGEQAYPEYLITYQIMRPEGMVDG.

ANK repeat units lie at residues 57-89, 90-122, and 123-155; these read RKST…ARDD, GGLI…ARDN, and WNYT…IRNT. A (3S)-3-hydroxyasparagine; by HIF1AN; partial modification is found at Asn203. ANK repeat units follow at residues 210–242, 243–275, 276–308, 363–398, 399–431, and 432–464; these read RKST…AKDK, GDLV…AMDL, WQFT…LLNC, THET…EKTK, EFLT…ALDN, and LGQT…IISL. (3S)-3-hydroxyhistidine; by HIF1AN; partial is present on His238. Residue Asn271 is modified to (3S)-3-hydroxyasparagine; by HIF1AN; partial. The residue at position 427 (Asn427) is a (3S)-3-hydroxyasparagine; by HIF1AN; partial. Asn518 carries the (3S)-3-hydroxyasparagine; by HIF1AN; partial modification. ANK repeat units follow at residues 525–557, 558–590, and 591–623; these read RQST…AKDK, GGLV…VADL, and WKFT…KKNR. The tract at residues 545–553 is HIF1AN-binding; sequence LLQHGADVH. Residue His553 is modified to (3S)-3-hydroxyhistidine; by HIF1AN; partial. Asn586 carries the (3S)-3-hydroxyasparagine; by HIF1AN; partial modification. 3 positions are modified to (3S)-3-hydroxyasparagine; by HIF1AN; partial: Asn671, Asn706, and Asn739. ANK repeat units lie at residues 678–710, 711–743, and 744–776; these read RHST…AQDK, GGLI…ATDK, and WAFT…LKNQ. The segment at 819–839 is disordered; that stretch reads GATADALSSGPSSPSSLSAAS. Residues 822–839 show a composition bias toward low complexity; that stretch reads ADALSSGPSSPSSLSAAS. Residues 873–936 enclose the SAM domain; the sequence is GVDFSITQFV…IKGVERLISG (64 aa). In terms of domain architecture, PARP catalytic spans 959-1164; the sequence is SPDDKEFQSV…YQIMRPEGMV (206 aa). Residues Cys1081, His1084, Cys1089, and Cys1092 each contribute to the Zn(2+) site.

The protein belongs to the ARTD/PARP family. In terms of assembly, oligomerizes and associates with TNKS. Interacts with the cytoplasmic domain of LNPEP/Otase in SLC2A4/GLUT4-vesicles. Binds to the N-terminus of Grb14 and TRF1 with its ankyrin repeat region. Interacts with HIF1AN. Interacts with RNF146; this interaction leads to ubiquitination and proteasomal degradation. Interacts with NUMA1. Ubiquitinated at 'Lys-48' and 'Lys-63' by RNF146 when auto-poly-ADP-ribosylated; this leads to degradation. Deubiquitinated by USP25; leading to stabilization. Post-translationally, ADP-ribosylated (-auto). Poly-ADP-ribosylated protein is recognized by RNF146, followed by ubiquitination. In terms of processing, the crystallographic evidence suggests that the 3-hydroxyhistidine may be the (3S) stereoisomer. In terms of tissue distribution, highly expressed in placenta, skeletal muscle, liver, brain, kidney, heart, thymus, spinal cord, lung, peripheral blood leukocytes, pancreas, lymph nodes, spleen, prostate, testis, ovary, small intestine, colon, mammary gland, breast and breast carcinoma, and in common-type meningioma. Highly expressed in fetal liver, heart and brain.

It localises to the cytoplasm. The protein resides in the golgi apparatus membrane. It is found in the nucleus. Its subcellular location is the chromosome. The protein localises to the telomere. It carries out the reaction NAD(+) + (ADP-D-ribosyl)n-acceptor = nicotinamide + (ADP-D-ribosyl)n+1-acceptor + H(+).. The enzyme catalyses L-aspartyl-[protein] + NAD(+) = 4-O-(ADP-D-ribosyl)-L-aspartyl-[protein] + nicotinamide. The catalysed reaction is L-glutamyl-[protein] + NAD(+) = 5-O-(ADP-D-ribosyl)-L-glutamyl-[protein] + nicotinamide. With respect to regulation, specifically inhibited by XAV939, a small molecule, leading to inhibit the Wnt signaling pathway by stabilizing AXIN1 and AXIN2. Inhibited by talazoparib. Its function is as follows. Poly-ADP-ribosyltransferase involved in various processes such as Wnt signaling pathway, telomere length and vesicle trafficking. Acts as an activator of the Wnt signaling pathway by mediating poly-ADP-ribosylation of AXIN1 and AXIN2, 2 key components of the beta-catenin destruction complex: poly-ADP-ribosylated target proteins are recognized by RNF146, which mediates their ubiquitination and subsequent degradation. Also mediates poly-ADP-ribosylation of BLZF1 and CASC3, followed by recruitment of RNF146 and subsequent ubiquitination. Mediates poly-ADP-ribosylation of TERF1, thereby contributing to the regulation of telomere length. Stimulates 26S proteasome activity. The sequence is that of Poly [ADP-ribose] polymerase tankyrase-2 from Homo sapiens (Human).